An 86-amino-acid chain; its full sequence is Sec-independent protein translocase protein TatA (86 aa).

A helical membrane pass occupies residues 1–21; it reads MGISIWQLLIILAIVLVLFGA.

This sequence belongs to the TatA/E family. The Tat system comprises two distinct complexes: a TatABC complex, containing multiple copies of TatA, TatB and TatC subunits, and a separate TatA complex, containing only TatA subunits. Substrates initially bind to the TatABC complex, which probably triggers association of the separate TatA complex to form the active translocon.

The protein localises to the cell inner membrane. Functionally, part of the twin-arginine translocation (Tat) system that transports large folded proteins containing a characteristic twin-arginine motif in their signal peptide across membranes. TatA could form the protein-conducting channel of the Tat system. The protein is Sec-independent protein translocase protein TatA of Hydrogenovibrio crunogenus (strain DSM 25203 / XCL-2) (Thiomicrospira crunogena).